The following is an 834-amino-acid chain: 1,4-alpha-glucan branching enzyme GlgB (834 aa).

Catalysis depends on Asp-511, which acts as the Nucleophile. The active-site Proton donor is Glu-565.

Belongs to the glycosyl hydrolase 13 family. GlgB subfamily. Monomer.

It catalyses the reaction Transfers a segment of a (1-&gt;4)-alpha-D-glucan chain to a primary hydroxy group in a similar glucan chain.. It functions in the pathway glycan biosynthesis; glycogen biosynthesis. Catalyzes the formation of the alpha-1,6-glucosidic linkages in glycogen by scission of a 1,4-alpha-linked oligosaccharide from growing alpha-1,4-glucan chains and the subsequent attachment of the oligosaccharide to the alpha-1,6 position. The polypeptide is 1,4-alpha-glucan branching enzyme GlgB (glgB) (Burkholderia thailandensis (strain ATCC 700388 / DSM 13276 / CCUG 48851 / CIP 106301 / E264)).